A 408-amino-acid polypeptide reads, in one-letter code: Elongation factor Tu, chloroplastic (408 aa).

The tr-type G domain maps to 10 to 214 (KPHVNIGTIG…AVDSYIPTPK (205 aa)). Residues 19-26 (GHVDHGKT) form a G1 region. GTP is bound at residue 19-26 (GHVDHGKT). Residue Thr26 participates in Mg(2+) binding. A G2 region spans residues 60 to 64 (GITIN). Residues 81-84 (DCPG) are G3. GTP is bound by residues 81 to 85 (DCPGH) and 136 to 139 (NKED). The interval 136–139 (NKED) is G4. Positions 174–176 (SAL) are G5.

This sequence belongs to the TRAFAC class translation factor GTPase superfamily. Classic translation factor GTPase family. EF-Tu/EF-1A subfamily.

It localises to the plastid. It is found in the chloroplast. It carries out the reaction GTP + H2O = GDP + phosphate + H(+). Functionally, GTP hydrolase that promotes the GTP-dependent binding of aminoacyl-tRNA to the A-site of ribosomes during protein biosynthesis. The polypeptide is Elongation factor Tu, chloroplastic (tufA) (Chara connivens (Convergent stonewort)).